Reading from the N-terminus, the 843-residue chain is Protein P (843 aa).

Residues 1–177 (MPLSYQHFRR…FCGSPYSWEQ (177 aa)) form a terminal protein domain (TP) region. Residues 178–346 (ELQHGSTSLN…YCLSHIINLL (169 aa)) are spacer. Residues 228 to 316 (KQGQLANGKQ…VPPSTVGSES (89 aa)) form a disordered region. Composition is skewed to polar residues over residues 262–276 (TGHS…TSRF), 286–299 (NPSL…TSTG), and 307–316 (VPPSTVGSES). Residues 347-690 (EDWGPCYEHG…YMNLYPVARQ (344 aa)) are polymerase/reverse transcriptase domain (RT). One can recognise a Reverse transcriptase domain in the interval 357–600 (EHHIRTPRTP…YSLHFMGYII (244 aa)). Mg(2+) is bound by residues D429, D551, and D552.

The protein belongs to the hepadnaviridae P protein family.

The catalysed reaction is DNA(n) + a 2'-deoxyribonucleoside 5'-triphosphate = DNA(n+1) + diphosphate. It carries out the reaction Endonucleolytic cleavage to 5'-phosphomonoester.. Its activity is regulated as follows. Activated by host HSP70 and HSP40 in vitro to be able to bind the epsilon loop of the pgRNA. Because deletion of the RNase H region renders the protein partly chaperone-independent, the chaperones may be needed indirectly to relieve occlusion of the RNA-binding site by this domain. Inhibited by several reverse-transcriptase inhibitors: Lamivudine, Adefovir and Entecavir. Multifunctional enzyme that converts the viral RNA genome into dsDNA in viral cytoplasmic capsids. This enzyme displays a DNA polymerase activity that can copy either DNA or RNA templates, and a ribonuclease H (RNase H) activity that cleaves the RNA strand of RNA-DNA heteroduplexes in a partially processive 3'- to 5'-endonucleasic mode. Neo-synthesized pregenomic RNA (pgRNA) are encapsidated together with the P protein, and reverse-transcribed inside the nucleocapsid. Initiation of reverse-transcription occurs first by binding the epsilon loop on the pgRNA genome, and is initiated by protein priming, thereby the 5'-end of (-)DNA is covalently linked to P protein. Partial (+)DNA is synthesized from the (-)DNA template and generates the relaxed circular DNA (RC-DNA) genome. After budding and infection, the RC-DNA migrates in the nucleus, and is converted into a plasmid-like covalently closed circular DNA (cccDNA). The activity of P protein does not seem to be necessary for cccDNA generation, and is presumably released from (+)DNA by host nuclear DNA repair machinery. This is Protein P from Homo sapiens (Human).